The sequence spans 307 residues: Acetyl-coenzyme A carboxylase carboxyl transferase subunit beta (307 aa).

The CoA carboxyltransferase N-terminal domain occupies 28-297; the sequence is LWVKCPDTGQ…TPQPGTAPEP (270 aa). A disordered region spans residues 286-307; that stretch reads RRTPQPGTAPEPTTPEPLPNAA. Over residues 292–307 the composition is skewed to pro residues; it reads GTAPEPTTPEPLPNAA.

The protein belongs to the AccD/PCCB family. In terms of assembly, acetyl-CoA carboxylase is a heterohexamer composed of biotin carboxyl carrier protein (AccB), biotin carboxylase (AccC) and two subunits each of ACCase subunit alpha (AccA) and ACCase subunit beta (AccD).

The protein localises to the cytoplasm. It carries out the reaction N(6)-carboxybiotinyl-L-lysyl-[protein] + acetyl-CoA = N(6)-biotinyl-L-lysyl-[protein] + malonyl-CoA. It participates in lipid metabolism; malonyl-CoA biosynthesis; malonyl-CoA from acetyl-CoA: step 1/1. In terms of biological role, component of the acetyl coenzyme A carboxylase (ACC) complex. Biotin carboxylase (BC) catalyzes the carboxylation of biotin on its carrier protein (BCCP) and then the CO(2) group is transferred by the transcarboxylase to acetyl-CoA to form malonyl-CoA. The sequence is that of Acetyl-coenzyme A carboxylase carboxyl transferase subunit beta from Methylorubrum extorquens (strain CM4 / NCIMB 13688) (Methylobacterium extorquens).